The primary structure comprises 344 residues: uncharacterized protein (344 aa).

The protein belongs to the glycosyltransferase 2 family.

This is an uncharacterized protein from Escherichia coli (strain K12).